We begin with the raw amino-acid sequence, 331 residues long: MKQTVYTASPESQQIHVWSLNHEGTLTLVQVVDVPGQVQPMVVSPDKRYLYVGVRPEFRVLAYRIAPDDGALTFAAESALPGSPTHISTDHHGRFVFVGSYNAGNVSVTRLQDGLPVELVDVVEGLDGCHSANITPDNRTLWVPALKQDRICLFTLSDDGHLVAQEPAEVNTVEGAGPRHMVFHPNRQYAYCVNELNSSVDVWQLKNPHGEIECVQTLDMMPADFSDTRWAADIHITPDGRHLYACDRTASLITVFSVSEDGSVLSVEGFQPTEAQPRGFNIDNSRKYLIAAGQKSHHIAVYEITGTQGLLTEKGRYAVGQGPMWVVVNAY.

This sequence belongs to the cycloisomerase 2 family.

The enzyme catalyses 6-phospho-D-glucono-1,5-lactone + H2O = 6-phospho-D-gluconate + H(+). Its pathway is carbohydrate degradation; pentose phosphate pathway; D-ribulose 5-phosphate from D-glucose 6-phosphate (oxidative stage): step 2/3. Its function is as follows. Catalyzes the hydrolysis of 6-phosphogluconolactone to 6-phosphogluconate. The chain is 6-phosphogluconolactonase from Salmonella typhi.